Consider the following 436-residue polypeptide: Cytochrome b5-related protein (436 aa).

Residues 16–100 form the Cytochrome b5 heme-binding domain; the sequence is PTYRNSALIT…IAKYKVRDAA (85 aa). Heme is bound by residues His59 and His82.

As to expression, muscle.

Functionally, may play a role in muscle cell metabolism. The sequence is that of Cytochrome b5-related protein (Cyt-b5-r) from Drosophila melanogaster (Fruit fly).